The sequence spans 424 residues: S-inosyl-L-homocysteine hydrolase (424 aa).

Substrate is bound by residues Asp130 and Glu155. An NAD(+)-binding site is contributed by 156–158; the sequence is TTT. Substrate-binding residues include Lys185 and Asp189. NAD(+) is bound by residues Asn190, 219 to 224, Glu242, Asn277, 298 to 300, and Asn346; these read GYGWCG and AGH.

The protein belongs to the adenosylhomocysteinase family. It depends on NAD(+) as a cofactor.

The protein localises to the cytoplasm. It carries out the reaction S-inosyl-L-homocysteine + H2O = L-homocysteine + inosine. Its pathway is amino-acid biosynthesis; S-adenosyl-L-methionine biosynthesis. Functionally, catalyzes the hydrolysis of S-inosyl-L-homocysteine (SIH) to L-homocysteine (Hcy) and inosine. Likely functions in a S-adenosyl-L-methionine (SAM) recycling pathway from S-adenosyl-L-homocysteine (SAH) produced from SAM-dependent methylation reactions. Can also catalyze the reverse reaction in vitro, i.e. the synthesis of SIH from Hcy and inosine. The chain is S-inosyl-L-homocysteine hydrolase from Methanopyrus kandleri (strain AV19 / DSM 6324 / JCM 9639 / NBRC 100938).